The sequence spans 631 residues: Phosphomethylpyrimidine synthase (631 aa).

Substrate is bound by residues Asn239, Met268, Tyr297, His333, Ser353 to Gly355, Asp394 to Arg397, and Glu433. Position 437 (His437) interacts with Zn(2+). Tyr460 provides a ligand contact to substrate. Zn(2+) is bound at residue His501. [4Fe-4S] cluster contacts are provided by Cys581, Cys584, and Cys589.

It belongs to the ThiC family. In terms of assembly, homodimer. [4Fe-4S] cluster serves as cofactor.

It carries out the reaction 5-amino-1-(5-phospho-beta-D-ribosyl)imidazole + S-adenosyl-L-methionine = 4-amino-2-methyl-5-(phosphooxymethyl)pyrimidine + CO + 5'-deoxyadenosine + formate + L-methionine + 3 H(+). It participates in cofactor biosynthesis; thiamine diphosphate biosynthesis. Functionally, catalyzes the synthesis of the hydroxymethylpyrimidine phosphate (HMP-P) moiety of thiamine from aminoimidazole ribotide (AIR) in a radical S-adenosyl-L-methionine (SAM)-dependent reaction. This is Phosphomethylpyrimidine synthase from Salmonella typhi.